We begin with the raw amino-acid sequence, 283 residues long: Bifunctional protein FolD (283 aa).

166 to 168 (GAS) contributes to the NADP(+) binding site.

This sequence belongs to the tetrahydrofolate dehydrogenase/cyclohydrolase family. Homodimer.

The enzyme catalyses (6R)-5,10-methylene-5,6,7,8-tetrahydrofolate + NADP(+) = (6R)-5,10-methenyltetrahydrofolate + NADPH. It catalyses the reaction (6R)-5,10-methenyltetrahydrofolate + H2O = (6R)-10-formyltetrahydrofolate + H(+). The protein operates within one-carbon metabolism; tetrahydrofolate interconversion. In terms of biological role, catalyzes the oxidation of 5,10-methylenetetrahydrofolate to 5,10-methenyltetrahydrofolate and then the hydrolysis of 5,10-methenyltetrahydrofolate to 10-formyltetrahydrofolate. In Coxiella burnetii (strain CbuK_Q154) (Coxiella burnetii (strain Q154)), this protein is Bifunctional protein FolD.